The primary structure comprises 589 residues: Serine/threonine-protein kinase shk2 (589 aa).

Positions 23–125 (GIIRSGWVML…WMDLISSRAL (103 aa)) constitute a PH domain. Residues 129–142 (VSSPMNPKHQVHVG) enclose the CRIB domain. A Protein kinase domain is found at 309–566 (FNVKHKLGQG…AAELLTHSFL (258 aa)). Residues 315 to 323 (LGQGASGSV) and Lys343 contribute to the ATP site. Asp434 (proton acceptor) is an active-site residue.

This sequence belongs to the protein kinase superfamily. STE Ser/Thr protein kinase family. STE20 subfamily.

It carries out the reaction L-seryl-[protein] + ATP = O-phospho-L-seryl-[protein] + ADP + H(+). The catalysed reaction is L-threonyl-[protein] + ATP = O-phospho-L-threonyl-[protein] + ADP + H(+). Forms an activated complex with GTP-bound Ras-like cdc42. Participates in Ras-dependent morphological control and mating response pathways. The chain is Serine/threonine-protein kinase shk2 (shk2) from Schizosaccharomyces pombe (strain 972 / ATCC 24843) (Fission yeast).